Reading from the N-terminus, the 191-residue chain is MYGPKDHGWIEVVAGPMYSGKTEELIRRIRRAEIAKQKVQVFKPEIDNRYSKQDVVSHAGDKIQSVPVKSSKEILEKLLDDTDVIGIDEAQFFDDSLVEIVSKIANNNRRVICAGLDMDFKGEPFGPMPKLMAIAEFVDKIQAVCMVCNNPATRTQRLINGKPAKKSDPVVLIGAQESYEARCRKCHCVPR.

ATP is bound by residues 15–22 and 88–91; these read GPMYSGKT and DEAQ. The Proton acceptor role is filled by Glu89. Zn(2+) contacts are provided by Cys145, Cys148, Cys183, and Cys186.

Belongs to the thymidine kinase family. As to quaternary structure, homotetramer.

Its subcellular location is the cytoplasm. The catalysed reaction is thymidine + ATP = dTMP + ADP + H(+). The chain is Thymidine kinase from Clostridium botulinum (strain Kyoto / Type A2).